The primary structure comprises 420 residues: Dynein axonemal assembly factor 4 (420 aa).

One can recognise a CS domain in the interval 3–87; that stretch reads LQVSDYSWQQ…KEAAMWETLS (85 aa). The mediates interaction with ESR1 and STUB1 stretch occupies residues 7–103; sequence DYSWQQTKTA…EMMQRIREKS (97 aa). TPR repeat units follow at residues 290-323, 324-357, and 366-399; these read PEWL…NNKM, PLLY…LMPP, and MKAH…DPSN.

In terms of assembly, interacts with ZMYND10. Interacts with STUB1. Interacts with ESR1 and ESR2. Interacts with DNAAF2. Interacts with CCT3, CCT4, CCT5 and CCT8. Interacts with DNAAF6/PIH1D3.

Its subcellular location is the nucleus. The protein resides in the cytoplasm. It is found in the cell projection. The protein localises to the neuron projection. It localises to the dynein axonemal particle. Involved in neuronal migration during development of the cerebral neocortex. May regulate the stability and proteasomal degradation of the estrogen receptors that play an important role in neuronal differentiation, survival and plasticity. Axonemal dynein assembly factor required for ciliary motility. This is Dynein axonemal assembly factor 4 from Pan paniscus (Pygmy chimpanzee).